Reading from the N-terminus, the 507-residue chain is RNA-splicing ligase RtcB homolog (507 aa).

5 residues coordinate Mn(2+): Asp-121, Cys-124, His-229, His-261, and His-355. Residue Asn-228–Glu-232 coordinates GMP. GMP-binding positions include His-355–Asn-356, Gly-404–Met-407, Ser-411, His-430–Gly-433, and Lys-506. His-430 acts as the GMP-histidine intermediate in catalysis.

The protein belongs to the RtcB family. In terms of assembly, catalytic component of the tRNA-splicing ligase complex. Mn(2+) is required as a cofactor.

The catalysed reaction is a 3'-end 3'-phospho-ribonucleotide-RNA + a 5'-end dephospho-ribonucleoside-RNA + GTP = a ribonucleotidyl-ribonucleotide-RNA + GMP + diphosphate. It catalyses the reaction a 3'-end 2',3'-cyclophospho-ribonucleotide-RNA + a 5'-end dephospho-ribonucleoside-RNA + GTP + H2O = a ribonucleotidyl-ribonucleotide-RNA + GMP + diphosphate + H(+). In terms of biological role, catalytic subunit of the tRNA-splicing ligase complex that acts by directly joining spliced tRNA halves to mature-sized tRNAs by incorporating the precursor-derived splice junction phosphate into the mature tRNA as a canonical 3',5'-phosphodiester. May act as an RNA ligase with broad substrate specificity, and may function toward other RNAs. The protein is RNA-splicing ligase RtcB homolog of Branchiostoma floridae (Florida lancelet).